Reading from the N-terminus, the 594-residue chain is Actin-histidine N-methyltransferase (594 aa).

The interval 1–22 is disordered; it reads MGKKSRVKTQKSGTGATATVSP. The segment covering 10–20 has biased composition (polar residues); sequence QKSGTGATATV. S-adenosyl-L-methionine is bound by residues arginine 75, 104–106, arginine 254, 275–279, and 325–327; these read EGF, DMCNH, and SGF. Positions 94 to 314 constitute an SET domain; sequence EGFEMVNFKE…AGDQIYIFYG (221 aa). The tract at residues 551–594 is disordered; the sequence is GLVNGENLIPNGTRSENESLSPEESENVTGEESSGSMAKVKERL.

Belongs to the class V-like SAM-binding methyltransferase superfamily. SETD3 actin-histidine methyltransferase family. In terms of assembly, interacts with MYOD1. In terms of processing, phosphorylated by GSK3B, which is required for recognition by the SCF(FBXW7) complex and subsequent degradation. Ubiquitinated by the SCF(FBXW7) complex following phosphorylation by GSK3B, leading to its degradation by the proteasome. Prominently expressed in the heart and skeletal muscles and is also detected weakly in the stomach, small intestine, and colon.

It is found in the cytoplasm. Its subcellular location is the nucleus. It catalyses the reaction L-histidyl-[protein] + S-adenosyl-L-methionine = N(tele)-methyl-L-histidyl-[protein] + S-adenosyl-L-homocysteine + H(+). In terms of biological role, protein-histidine N-methyltransferase that specifically mediates 3-methylhistidine (tele-methylhistidine) methylation of actin at 'His-73'. Histidine methylation of actin is required for smooth muscle contraction of the laboring uterus during delivery. Does not have protein-lysine N-methyltransferase activity and probably only catalyzes histidine methylation of actin. The protein is Actin-histidine N-methyltransferase of Mus musculus (Mouse).